We begin with the raw amino-acid sequence, 141 residues long: Large ribosomal subunit protein uL11 (141 aa).

This sequence belongs to the universal ribosomal protein uL11 family. Part of the ribosomal stalk of the 50S ribosomal subunit. Interacts with L10 and the large rRNA to form the base of the stalk. L10 forms an elongated spine to which L12 dimers bind in a sequential fashion forming a multimeric L10(L12)X complex. Post-translationally, one or more lysine residues are methylated.

Functionally, forms part of the ribosomal stalk which helps the ribosome interact with GTP-bound translation factors. The protein is Large ribosomal subunit protein uL11 of Methylacidiphilum infernorum (isolate V4) (Methylokorus infernorum (strain V4)).